The following is a 105-amino-acid chain: Prothymosin alpha-A (105 aa).

Positions 1-30 are enriched in basic and acidic residues; it reads MADTKVDTSKEVSAKDLKEKKQVEEAENGK. Residues 1 to 105 are disordered; that stretch reads MADTKVDTSK…VDPKKQKTDV (105 aa). 2 stretches are compositionally biased toward acidic residues: residues 39-78 and 87-96; these read ENEENGDQENEVDEEDDDVAEEDEEDDGEGDDDDEDEEAE and EDDDDDEDDV.

It belongs to the pro/parathymosin family. In terms of tissue distribution, at the 20-somite stage (18 hpf), expressed on the dorsal side of the embryo in the developing central and peripheral nervous system (CNS and PNS), in the tail bud and the pronephric ducts. In the PNS, expressed in the otic vesicle, trigeminal ganglion and the anterior lateral line placode. Localized throughout the hindbrain, with highest expression in rhombomeres 3 and 4. In the head, expressed in the olfactory placode and in the diencephalic region. At the end of the segmentation period (20 hpf), expression begins in the newly forming endodermal pouches, and weakly in the pharyngeal arch precursor cells. During the early pharyngula period, expressed in the pectoral fin bud, the developing retina, and still present in the central nervous system and endodermal pouches. In the tail, expressed in the spinal cord and posterior lateral line precursors. Weakly expressed in the pronephric ducts, only in the corpuscles of Stanius. At 48 hpf, still expressed in the retina and brain, where expression is almost uniform. At this stage, expression is decreased in the spinal cord and is absent from the lateral line cells and pronephric ducts, but appears in the intestine and continues in the pharyngeal arches. In 72 hpf embryos, expression in the brain remains uniform but is restricted to amacrine cells in the retina. In the pharyngeal arches, expression continues to be limited to the ectodermal and endodermal covering cells.

It localises to the nucleus. This Danio rerio (Zebrafish) protein is Prothymosin alpha-A (ptmaa).